Consider the following 562-residue polypeptide: Glucan 1,3-beta-glucosidase 2 (562 aa).

Residues 1–22 (MPLKSFFFSAFLVLCLSKFTQG) form the signal peptide. 7 N-linked (GlcNAc...) asparagine glycosylation sites follow: Asn-50, Asn-77, Asn-86, Asn-90, Asn-106, Asn-157, and Asn-220. The active-site Proton donor is Glu-254. N-linked (GlcNAc...) asparagine glycans are attached at residues Asn-281, Asn-285, Asn-310, Asn-317, and Asn-322. The active-site Nucleophile is the His-334. N-linked (GlcNAc...) asparagine glycosylation is found at Asn-401, Asn-480, and Asn-539.

The protein belongs to the glycosyl hydrolase 5 (cellulase A) family.

Its subcellular location is the cell membrane. The catalysed reaction is Successive hydrolysis of beta-D-glucose units from the non-reducing ends of (1-&gt;3)-beta-D-glucans, releasing alpha-glucose.. In Saccharomyces cerevisiae (strain ATCC 204508 / S288c) (Baker's yeast), this protein is Glucan 1,3-beta-glucosidase 2 (EXG2).